The following is a 473-amino-acid chain: Ral-GDS-related protein (473 aa).

Residues 117–215 (EPNEAKPDDP…NQPSEELPDM (99 aa)) are disordered. A compositionally biased stretch (low complexity) spans 134–157 (ALTMPALEPAPPLLADLGPALEPE). Positions 173–185 (GPAPAPGEGPPPG) are enriched in pro residues. A Ras-GEF domain is found at 219–471 (PPRLLAEQLT…YKLSCQLEPE (253 aa)).

The protein resides in the cytoplasmic vesicle. The polypeptide is Ral-GDS-related protein (RGL4) (Homo sapiens (Human)).